Reading from the N-terminus, the 681-residue chain is MSAELASRGRKVYFVGLNEYPFLPLVAGLLRTYAEQDERIAAAYDFQEPVFLVAPVQEMADGIVEPDVLALSCYVWNFRRQMKVAKLVKERYPNVLVVAGGPHVPDRPGNFFEKHPYVDVLAHGEGEVAFRELLATRLSDHPDYTAVPGVSVRRGTEAVVGPKAKRLPRLIDTPSPYLLGVMDGAVATCRERGLRFYALWETNRGCPYSCSFCDWGSATMSTLRKFEDERLQDEIEWFARHDVEDLFICDANFGIMPRDLEIAHALAEARGELGAPRQVRVNFAKNSNDRVFDISKTWHDADLLMGTTLSMQSTDMDVLEAIDRKNIGLDNYRKLQQRYAAENIHTYTELILGLPMETARSFRDGIGSLLEAGNHEDLRVYELGILPNAPLNTPEKIEQYGLRTVPKRMYVERPGTPDDEAETFEMVMETNAMPRDAWVESFSFIQAVQFLHNGCYTRYLSIFLRQEHGIGYTRFYEGLQDYFTGRPDTVLGALYLRMRSLYHDYIDMPALPLANLVASQPDMAADLAPYGRRRGWTIDNWGWLRIATDFDRFHTELREYLATLGLDPAGDARLEDVLRFQQDVMLRPDYSPELGKSAEYAHDWPGYFAGGLLRPRRVRVAYGDQSFGANGRYRPVPGDLKAFTMAAIGTSYPVSRMGHFCHRFESAEVTSLAEPVVSEQW.

The region spanning 1 to 144 (MSAELASRGR…ATRLSDHPDY (144 aa)) is the B12-binding domain. Cob(II)alamin-binding residues include asparagine 18, serine 72, tyrosine 74, valine 75, histidine 103, glycine 126, and glutamate 127. Positions 192-417 (RGLRFYALWE…RMYVERPGTP (226 aa)) constitute a Radical SAM core domain. [4Fe-4S] cluster contacts are provided by cysteine 206 and cysteine 210. Phenylalanine 212 contacts 5'-deoxyadenosine. Cysteine 213 is a binding site for [4Fe-4S] cluster. Cob(II)alamin is bound by residues aspartate 214 and cysteine 249. Residues glutamine 312, glutamate 349, and glycine 384 each coordinate 5'-deoxyadenosine.

Belongs to the methyltransferase superfamily. Requires [4Fe-4S] cluster as cofactor. The cofactor is cob(II)alamin.

It participates in antibiotic biosynthesis. In terms of biological role, methyltransferase involved in the biosynthesis of the beta-lactam carbapenem antibiotic asparenomycin. Catalyzes three consecutive S-adenosyl-L-methionine-dependent methylations to build out the C6-isopropyl side chain in a stereocontrolled manner. The protein is Cobalamin-dependent radical SAM methyltransferase TokK of Streptomyces tokunonensis.